A 534-amino-acid chain; its full sequence is Ethanolamine kinase (534 aa).

The residue at position 23 (serine 23) is a Phosphoserine.

It belongs to the choline/ethanolamine kinase family.

Its subcellular location is the cytoplasm. The catalysed reaction is ethanolamine + ATP = phosphoethanolamine + ADP + H(+). The enzyme catalyses choline + ATP = phosphocholine + ADP + H(+). It participates in phospholipid metabolism; phosphatidylethanolamine biosynthesis; phosphatidylethanolamine from ethanolamine: step 1/3. Catalyzes the committed step of phosphatidylethanolamine synthesis via the CDP-ethanolamine branch of the Kennedy pathway. Also exhibits choline kinase activity, thus contributing to phosphatidylcholine synthesis via the CDP-choline pathway, but its preferred substrate is ethanolamine. This Saccharomyces cerevisiae (strain ATCC 204508 / S288c) (Baker's yeast) protein is Ethanolamine kinase (EKI1).